Here is a 594-residue protein sequence, read N- to C-terminus: Cytoplasmic polyadenylation element-binding protein 1 (594 aa).

The disordered stretch occupies residues 1–33; sequence MQHQVKACGDSKSTTRSLQGNRRSGAASLKKPS. Residues 11 to 22 show a composition bias toward polar residues; it reads SKSTTRSLQGNR. RRM domains are found at residues 257–364 and 381–452; these read RKVF…PWRL and RTVF…HAET. Positions 519 to 560 are disordered; sequence TGDQTRILPRPPHHQSSHYSPRSHQMMNHDSMESSNQSRGNT. Polar residues predominate over residues 535-560; that stretch reads SHYSPRSHQMMNHDSMESSNQSRGNT.

In terms of assembly, interacts with fbf-1.

Cytoplasmic polyadenylation element binding protein that binds to and regulates the translation of specific mRNAs. Essential for progression through meiosis. Involved in spermatogenesis. In Caenorhabditis remanei (Caenorhabditis vulgaris), this protein is Cytoplasmic polyadenylation element-binding protein 1 (cpb-1).